A 214-amino-acid polypeptide reads, in one-letter code: GTP-binding nuclear protein GSP1/Ran (214 aa).

A Small GTPase Ran-type domain is found at 4–168 (EVPTFKLVLV…LWLARKLAGN (165 aa)). GTP is bound at residue 15-22 (DGGTGKTT). Positions 34–42 (KKYIATIGV) are switch-I. GTP contacts are provided by residues G65, 119 to 122 (NKVD), and 147 to 149 (SAK). Positions 65 to 81 (GQEKFGGLRDGYYINAQ) are switch-II.

The protein belongs to the small GTPase superfamily. Ran family. In terms of assembly, found in a nuclear export complex with RanGTP, exportin and pre-miRNA.

The protein resides in the nucleus. Functionally, GTP-binding protein involved in nucleocytoplasmic transport. Required for the import of protein into the nucleus and also for RNA export. Involved in chromatin condensation and control of cell cycle. The chain is GTP-binding nuclear protein GSP1/Ran (GSP1) from Candida glabrata (strain ATCC 2001 / BCRC 20586 / JCM 3761 / NBRC 0622 / NRRL Y-65 / CBS 138) (Yeast).